The following is a 396-amino-acid chain: Succinyl-diaminopimelate desuccinylase (396 aa).

Histidine 74 contributes to the Zn(2+) binding site. Aspartate 76 is a catalytic residue. Aspartate 107 contributes to the Zn(2+) binding site. Glutamate 142 acts as the Proton acceptor in catalysis. Zn(2+) contacts are provided by glutamate 143, glutamate 171, and histidine 360.

The protein belongs to the peptidase M20A family. DapE subfamily. Homodimer. The cofactor is Zn(2+). It depends on Co(2+) as a cofactor.

The enzyme catalyses N-succinyl-(2S,6S)-2,6-diaminopimelate + H2O = (2S,6S)-2,6-diaminopimelate + succinate. It functions in the pathway amino-acid biosynthesis; L-lysine biosynthesis via DAP pathway; LL-2,6-diaminopimelate from (S)-tetrahydrodipicolinate (succinylase route): step 3/3. Its function is as follows. Catalyzes the hydrolysis of N-succinyl-L,L-diaminopimelic acid (SDAP), forming succinate and LL-2,6-diaminopimelate (DAP), an intermediate involved in the bacterial biosynthesis of lysine and meso-diaminopimelic acid, an essential component of bacterial cell walls. The polypeptide is Succinyl-diaminopimelate desuccinylase (Methylobacterium sp. (strain 4-46)).